Here is a 188-residue protein sequence, read N- to C-terminus: MTAPSCAFPVQFRQPSVSGLSQITKSLYISNGVAANNKLMLSSNQITMVINVSVEVVNTLYEDIQYMQVPVADSPNSRLCDFFDPIADHIHSVEMKQGRTLLHCAAGVSRSAALCLAYLMKYHAMSLLDAHTWTKSCRPIIRPNSGFWEQLIHYEFQLFGKNTVHMVSSPVGMIPDIYEKEVRLMIPL.

A Tyrosine-protein phosphatase domain is found at 19-160 (GLSQITKSLY…LIHYEFQLFG (142 aa)). Catalysis depends on cysteine 104, which acts as the Phosphocysteine intermediate.

Belongs to the protein-tyrosine phosphatase family. Non-receptor class dual specificity subfamily. In terms of tissue distribution, widely expressed with highest levels in liver, brain, ovary and testis.

It localises to the cytoplasm. The protein localises to the nucleus. The protein resides in the mitochondrion inner membrane. The enzyme catalyses O-phospho-L-tyrosyl-[protein] + H2O = L-tyrosyl-[protein] + phosphate. The catalysed reaction is O-phospho-L-seryl-[protein] + H2O = L-seryl-[protein] + phosphate. It carries out the reaction O-phospho-L-threonyl-[protein] + H2O = L-threonyl-[protein] + phosphate. With respect to regulation, activated by manganese ions, inhibited by iodoacetic acid. Functionally, can dephosphorylate single and diphosphorylated synthetic MAPK peptides, with preference for the phosphotyrosine and diphosphorylated forms over phosphothreonine. In vitro, dephosphorylates p-nitrophenyl phosphate (pNPP). This is Dual specificity protein phosphatase 18 (DUSP18) from Homo sapiens (Human).